The following is a 437-amino-acid chain: MNSFKKFLNKKRVQNHFKKSGEGVRLSSGESSSQPSAHAGAAQGGQIDRVAAADIAAQAAFKRMQKNEPQQNAGKRRIQMIAKRELEEERRQVEDLNISGTSSLQQPDREQHLEHSSAISRVLYTSELLGEHHIRSKADLLEDIKNFLSDQISEADDENDKVIAAVLMLYSLNKKHPKETAIETICKYCQNILEHPGEDKYKSIRLGNKAFQERVASVVGGRAFLEAVGFTEKSEGEDKFLVFTKPSDVHLVEALEALKDGQAVPIKVARNLEIFKLKEGQKPKAPKLADDFYNLSTAELKAEQRNKEMQVERMLTLRTKEMRQKDEQMTNYRYKYTLIRVRLPGNLLMQGVFGCHEPFSAVRVFVASTLSDALSTSEFTLRDAASQLVEDESASLAQLSLAPAALLHVVFAENLSDYGQIVADEHIEIIQELEASD.

Disordered regions lie at residues 1-45 (MNSF…AQGG) and 89-109 (ERRQ…QPDR). Positions 7–18 (FLNKKRVQNHFK) are enriched in basic residues. The 73-residue stretch at 179 to 251 (ETAIETICKY…VFTKPSDVHL (73 aa)) folds into the PUB domain. A UBX domain is found at 332 to 409 (YRYKYTLIRV…SLAPAALLHV (78 aa)).

As to quaternary structure, interacts with cdc-48.1 (via N-terminus) and cdc-48.2 (via N-terminus). Expressed in the pharynx and some head neurons.

Its function is as follows. Probably acts as an adapter for ATPase cdc-48.1 and/or cdc-48.2, conferring substrate specificity. Involved in the lysosomal clearance of cellular material in diet restricted conditions. The sequence is that of UBX domain-containing protein 6 from Caenorhabditis elegans.